The chain runs to 343 residues: 3-hydroxy-3-methylglutaryl-CoA lyase, cytoplasmic (343 aa).

Gly2 carries N-myristoyl glycine lipidation. The Pyruvate carboxyltransferase domain maps to 48–315; the sequence is VKIVEVGPRD…NTGVDLHKVM (268 aa). A substrate-binding site is contributed by Arg56. Residues Asp57, His248, and His250 each coordinate a divalent metal cation. Cys281 is an active-site residue. A divalent metal cation is bound at residue Asn290.

Belongs to the HMG-CoA lyase family. A divalent metal cation serves as cofactor. As to expression, present at high level in duodenum and small intestine (at protein level).

It localises to the cytoplasm. It is found in the cytosol. Its subcellular location is the endoplasmic reticulum membrane. It catalyses the reaction (3S)-3-hydroxy-3-methylglutaryl-CoA = acetoacetate + acetyl-CoA. It participates in metabolic intermediate metabolism; (S)-3-hydroxy-3-methylglutaryl-CoA degradation; acetoacetate from (S)-3-hydroxy-3-methylglutaryl-CoA: step 1/1. Functionally, non-mitochondrial 3-hydroxy-3-methylglutaryl-CoA lyase that catalyzes a cation-dependent cleavage of (S)-3-hydroxy-3-methylglutaryl-CoA into acetyl-CoA and acetoacetate, a key step in ketogenesis, the products of which support energy production in nonhepatic animal tissues. The protein is 3-hydroxy-3-methylglutaryl-CoA lyase, cytoplasmic (Hmgcll1) of Rattus norvegicus (Rat).